A 267-amino-acid polypeptide reads, in one-letter code: Cytokinesis defective protein 7 (267 aa).

The tract at residues 244 to 267 (RNQADQSILPPSGDQQHHRSELHA) is disordered. Residues 258–267 (QQHHRSELHA) show a composition bias toward basic and acidic residues.

This is Cytokinesis defective protein 7 from Caenorhabditis elegans.